Here is a 65-residue protein sequence, read N- to C-terminus: Large ribosomal subunit protein bL35 (65 aa).

The interval Met-1–Ala-25 is disordered.

The protein belongs to the bacterial ribosomal protein bL35 family.

In Clostridium botulinum (strain Alaska E43 / Type E3), this protein is Large ribosomal subunit protein bL35.